A 500-amino-acid chain; its full sequence is Cytochrome P450 71B22 (500 aa).

The helical transmembrane segment at 1–21 (MSISLYFLLLLPLFLIFFKKL) threads the bilayer. C441 lines the heme pocket.

It belongs to the cytochrome P450 family. Heme serves as cofactor.

The protein resides in the membrane. The polypeptide is Cytochrome P450 71B22 (CYP71B22) (Arabidopsis thaliana (Mouse-ear cress)).